A 667-amino-acid chain; its full sequence is DNA ligase (667 aa).

Residues Asp-32 to Asp-36, Ser-81 to Leu-82, and Glu-110 contribute to the NAD(+) site. Residue Lys-112 is the N6-AMP-lysine intermediate of the active site. NAD(+) contacts are provided by Arg-133, Glu-167, Lys-283, and Lys-307. Zn(2+) contacts are provided by Cys-401, Cys-404, Cys-419, and Cys-424. In terms of domain architecture, BRCT spans Glu-586–Ser-667.

It belongs to the NAD-dependent DNA ligase family. LigA subfamily. Mg(2+) is required as a cofactor. The cofactor is Mn(2+).

It carries out the reaction NAD(+) + (deoxyribonucleotide)n-3'-hydroxyl + 5'-phospho-(deoxyribonucleotide)m = (deoxyribonucleotide)n+m + AMP + beta-nicotinamide D-nucleotide.. In terms of biological role, DNA ligase that catalyzes the formation of phosphodiester linkages between 5'-phosphoryl and 3'-hydroxyl groups in double-stranded DNA using NAD as a coenzyme and as the energy source for the reaction. It is essential for DNA replication and repair of damaged DNA. The sequence is that of DNA ligase from Staphylococcus aureus (strain COL).